The following is a 205-amino-acid chain: Golgi to ER traffic protein 1 (205 aa).

The Lumenal portion of the chain corresponds to 1–3 (MDY). The helical transmembrane segment at 4–24 (WILLVLAFLVADKSWHLTGLL) threads the bilayer. Residues 25-96 (ATKLTSPERL…ATKARLAKLK (72 aa)) are Cytoplasmic-facing. Residues 32–96 (ERLQQLIRER…ATKARLAKLK (65 aa)) adopt a coiled-coil conformation. The chain crosses the membrane as a helical span at residues 97–117 (LLVVTVPFTALKFYKGKLPVY). Residues 118 to 156 (ALPKGMFPRFIEGTLEHGWLYMALAPLNMKQFSEGASVA) are Lumenal-facing. A helical membrane pass occupies residues 157-173 (VSLGIWLFALLRVLGAI). Topologically, residues 174 to 205 (EFVLETLREQNPQVATETAKVHARTAQAASAN) are cytoplasmic.

This sequence belongs to the WRB/GET1 family. In terms of assembly, component of the Golgi to ER traffic (GET) complex, which is composed of GET1, GET2 and GET3. Within the complex, GET1 and GET2 form a heterotetramer which is stabilized by phosphatidylinositol binding and which binds to the GET3 homodimer.

The protein resides in the endoplasmic reticulum membrane. Its subcellular location is the golgi apparatus membrane. Functionally, required for the post-translational delivery of tail-anchored (TA) proteins to the endoplasmic reticulum. Together with GET2, acts as a membrane receptor for soluble GET3, which recognizes and selectively binds the transmembrane domain of TA proteins in the cytosol. The GET complex cooperates with the HDEL receptor ERD2 to mediate the ATP-dependent retrieval of resident ER proteins that contain a C-terminal H-D-E-L retention signal from the Golgi to the ER. The sequence is that of Golgi to ER traffic protein 1 from Eremothecium gossypii (strain ATCC 10895 / CBS 109.51 / FGSC 9923 / NRRL Y-1056) (Yeast).